Reading from the N-terminus, the 354-residue chain is WASH complex subunit 3 (354 aa).

The disordered stretch occupies residues 76–354 (SSANVPVHNT…DDDDDDDESW (279 aa)). Over residues 107 to 143 (IPPPPPPPPPPMTGVPPPPPPPPPPPISKSNIPPPPA) the composition is skewed to pro residues. Positions 150 to 159 (ESDDDDEDNN) are enriched in acidic residues. Over residues 213-244 (PQPPQPQPQSPSPQPPPPPTTTSSIPVPPPPF) the composition is skewed to pro residues. A compositionally biased stretch (acidic residues) spans 251–260 (SDDDDDDDEG). Over residues 277–290 (NNNSNSNSYSNNNN) the composition is skewed to low complexity. Composition is skewed to acidic residues over residues 293–307 (DDDD…DDDN) and 342–354 (DADD…DESW).

The protein belongs to the CCDC53 family. As to quaternary structure, probable component of the WASH complex.

The chain is WASH complex subunit 3 from Dictyostelium discoideum (Social amoeba).